The following is a 48-amino-acid chain: Large ribosomal subunit protein bL34 (48 aa).

The protein belongs to the bacterial ribosomal protein bL34 family.

The chain is Large ribosomal subunit protein bL34 from Gloeothece citriformis (strain PCC 7424) (Cyanothece sp. (strain PCC 7424)).